Consider the following 418-residue polypeptide: UDP-N-acetylglucosamine 1-carboxyvinyltransferase (418 aa).

22–23 (KN) is a binding site for phosphoenolpyruvate. Arg91 is a UDP-N-acetyl-alpha-D-glucosamine binding site. The active-site Proton donor is the Cys115. A 2-(S-cysteinyl)pyruvic acid O-phosphothioketal modification is found at Cys115. UDP-N-acetyl-alpha-D-glucosamine is bound by residues 120 to 124 (RPVDL), 160 to 163 (KVSV), Asp305, and Ile327.

The protein belongs to the EPSP synthase family. MurA subfamily.

It localises to the cytoplasm. It catalyses the reaction phosphoenolpyruvate + UDP-N-acetyl-alpha-D-glucosamine = UDP-N-acetyl-3-O-(1-carboxyvinyl)-alpha-D-glucosamine + phosphate. It participates in cell wall biogenesis; peptidoglycan biosynthesis. Functionally, cell wall formation. Adds enolpyruvyl to UDP-N-acetylglucosamine. The polypeptide is UDP-N-acetylglucosamine 1-carboxyvinyltransferase (Baumannia cicadellinicola subsp. Homalodisca coagulata).